Here is a 147-residue protein sequence, read N- to C-terminus: Hemoglobin subunit gamma-2 (147 aa).

The Globin domain maps to 3-147 (HFTEEDKATI…VASALSSRYH (145 aa)). Residue Thr-13 is modified to Phosphothreonine. Phosphoserine is present on residues Ser-45, Ser-51, and Ser-53. Lys-60 carries the N6-acetyllysine modification. His-64 is a heme b binding site. Lys-83 carries the N6-acetyllysine modification. Heme b is bound at residue His-93. The residue at position 94 (Cys-94) is an S-nitrosocysteine. Ser-140, Ser-143, and Ser-144 each carry phosphoserine.

It belongs to the globin family. As to quaternary structure, heterotetramer of two alpha chains and two gamma chains in fetal hemoglobin (Hb F). As to expression, red blood cells.

Gamma chains make up the fetal hemoglobin F, in combination with alpha chains. In Hylobates lar (Lar gibbon), this protein is Hemoglobin subunit gamma-2 (HBG2).